The primary structure comprises 827 residues: Lon protease (827 aa).

The Lon N-terminal domain occupies 38–233 (LTLLASKYNV…VLLKYLLKDL (196 aa)). ATP is bound at residue 384-391 (GPPGVGKT). A Lon proteolytic domain is found at 619-800 (THLPGVAIGL…EEVIQLALQP (182 aa)). Active-site residues include Ser706 and Lys749.

The protein belongs to the peptidase S16 family. In terms of assembly, homohexamer. Organized in a ring with a central cavity.

Its subcellular location is the cytoplasm. It carries out the reaction Hydrolysis of proteins in presence of ATP.. In terms of biological role, ATP-dependent serine protease that mediates the selective degradation of mutant and abnormal proteins as well as certain short-lived regulatory proteins. Required for cellular homeostasis and for survival from DNA damage and developmental changes induced by stress. Degrades polypeptides processively to yield small peptide fragments that are 5 to 10 amino acids long. Binds to DNA in a double-stranded, site-specific manner. The protein is Lon protease of Amoebophilus asiaticus (strain 5a2).